The primary structure comprises 299 residues: MAAAEGDGGVRAEADRELEELLESALDDFDKAKPSPAPPPTTTAPDASGPQKRSPGDTAKDALFASQEKFFQELFDSELASQATAEFEKAMKELAEEEPHLVEQFQKLSEAAGRVGSDATSQQEFTSCLKETLSGLAKNATDLQNSGMSEEELTKAMEGLGMDEGDGEGTILPIMQSIMQNLLSRDVLYPSLKEITEKYPEWLRAHRDSLPPEQFEKYQEQHSVMGKICEQFEAETPTDSEATQKARFEVVLDLMQQLQDLGHPPKELAGEMPPGLNFDLDALNLSGPPGANGEQCLIM.

Residues 1 to 63 are disordered; the sequence is MAAAEGDGGV…SPGDTAKDAL (63 aa). Ala-2 carries the post-translational modification N-acetylalanine. Residues 2-56 are docking to the peroxisome membrane and binding to PEX3; it reads AAAEGDGGVRAEADRELEELLESALDDFDKAKPSPAPPPTTTAPDASGPQKRSPG. Positions 2 to 91 are necessary for PEX19 function on peroxisome biogenesis; that stretch reads AAAEGDGGVR…QATAEFEKAM (90 aa). The span at 16–27 shows a compositional bias: acidic residues; sequence RELEELLESALD. Ser-35, Ser-54, and Ser-66 each carry phosphoserine. Thr-236 is subject to Phosphothreonine. The residue at position 296 (Cys-296) is a Cysteine methyl ester. The S-farnesyl cysteine moiety is linked to residue Cys-296. The propeptide at 297 to 299 is removed in mature form; sequence LIM.

The protein belongs to the peroxin-19 family. As to quaternary structure, interacts with a broad range of peroxisomal membrane proteins, including PEX3, PEX10, PEX11A, PEX11B, PEX12, PEX13, PEX14 and PEX16, PXMP2/PMP22, PXMP4/PMP24, SLC25A17/PMP34, ABCD1/ALDP, ABCD2/ALDRP, and ABCD3/PMP70. Also interacts with the tumor suppressor CDKN2A/p19ARF.

It is found in the cytoplasm. Its subcellular location is the peroxisome membrane. Necessary for early peroxisomal biogenesis. Acts both as a cytosolic chaperone and as an import receptor for peroxisomal membrane proteins (PMPs). Binds and stabilizes newly synthesized PMPs in the cytoplasm by interacting with their hydrophobic membrane-spanning domains, and targets them to the peroxisome membrane by binding to the integral membrane protein PEX3. Excludes CDKN2A from the nucleus and prevents its interaction with MDM2, which results in active degradation of TP53. The protein is Peroxisomal biogenesis factor 19 (PEX19) of Bos taurus (Bovine).